We begin with the raw amino-acid sequence, 61 residues long: MAVPKRKTSPSKRGMRRSADALKAPTYIEDKNSGELRRPHHIDLKTGMYRGRQVLTPKESA.

A compositionally biased stretch (basic residues) spans 1–16; the sequence is MAVPKRKTSPSKRGMR. The interval 1–40 is disordered; the sequence is MAVPKRKTSPSKRGMRRSADALKAPTYIEDKNSGELRRPH. Basic and acidic residues predominate over residues 28–40; the sequence is IEDKNSGELRRPH.

The protein belongs to the bacterial ribosomal protein bL32 family.

The sequence is that of Large ribosomal subunit protein bL32 from Sinorhizobium medicae (strain WSM419) (Ensifer medicae).